The following is a 208-amino-acid chain: Small ribosomal subunit protein uS4A (208 aa).

In terms of domain architecture, S4 RNA-binding spans 98–164; sequence TRLDNVVYTL…AKIQSAIQAV (67 aa).

It belongs to the universal ribosomal protein uS4 family. In terms of assembly, part of the 30S ribosomal subunit. Contacts protein S5. The interaction surface between S4 and S5 is involved in control of translational fidelity.

Its function is as follows. One of the primary rRNA binding proteins, it binds directly to 16S rRNA where it nucleates assembly of the body of the 30S subunit. In terms of biological role, with S5 and S12 plays an important role in translational accuracy. The protein is Small ribosomal subunit protein uS4A of Bdellovibrio bacteriovorus (strain ATCC 15356 / DSM 50701 / NCIMB 9529 / HD100).